A 90-amino-acid chain; its full sequence is MNDSVKTSLKRTLIGRVVSNKMDKTVTVLVEHRVKHPIYGKYVVRSKKYHAHDEANTYNEGDLVEIQETRPVSKTKAWAVARLVEAARVI.

This sequence belongs to the universal ribosomal protein uS17 family. As to quaternary structure, part of the 30S ribosomal subunit.

In terms of biological role, one of the primary rRNA binding proteins, it binds specifically to the 5'-end of 16S ribosomal RNA. The sequence is that of Small ribosomal subunit protein uS17 from Burkholderia multivorans (strain ATCC 17616 / 249).